A 236-amino-acid chain; its full sequence is Ras-related protein RabY (236 aa).

18–25 (GDRKTGKT) is a GTP binding site. The Effector region signature appears at 40 to 48 (YRQTNLLHF). Residues 66 to 70 (DSQAD) and 126 to 129 (NKSD) each bind GTP. The segment covering 192 to 225 (QQQQQQQQQQQQQQQQQQQQQQQQQQQQQQQHQQ) has biased composition (low complexity). Residues 192–236 (QQQQQQQQQQQQQQQQQQQQQQQQQQQQQQQHQQSSKTKIGCLIQ) are disordered. Position 233 is a cysteine methyl ester (C233). Residue C233 is the site of S-geranylgeranyl cysteine attachment. Positions 234–236 (LIQ) are cleaved as a propeptide — removed in mature form.

It belongs to the small GTPase superfamily. Rab family.

It localises to the cell membrane. This Dictyostelium discoideum (Social amoeba) protein is Ras-related protein RabY (rabY).